A 235-amino-acid polypeptide reads, in one-letter code: Segregation and condensation protein A (235 aa).

Belongs to the ScpA family. As to quaternary structure, component of a cohesin-like complex composed of ScpA, ScpB and the Smc homodimer, in which ScpA and ScpB bind to the head domain of Smc. The presence of the three proteins is required for the association of the complex with DNA.

Its subcellular location is the cytoplasm. Its function is as follows. Participates in chromosomal partition during cell division. May act via the formation of a condensin-like complex containing Smc and ScpB that pull DNA away from mid-cell into both cell halves. This chain is Segregation and condensation protein A, found in Streptococcus equi subsp. zooepidemicus (strain MGCS10565).